The chain runs to 1116 residues: Cation channel sperm-associated auxiliary subunit beta (1116 aa).

Topologically, residues 1–1053 (MESPLIYVSV…QIYVDEAPLP (1053 aa)) are extracellular. A disulfide bond links cysteine 35 and cysteine 60. N-linked (GlcNAc...) asparagine glycans are attached at residues asparagine 90, asparagine 100, asparagine 118, asparagine 226, and asparagine 321. A disulfide bridge connects residues cysteine 189 and cysteine 302. Cysteines 330 and 343 form a disulfide. 2 N-linked (GlcNAc...) asparagine glycosylation sites follow: asparagine 618 and asparagine 690. 4 cysteine pairs are disulfide-bonded: cysteine 718-cysteine 816, cysteine 829-cysteine 1037, cysteine 911-cysteine 920, and cysteine 922-cysteine 937. Asparagine 913 and asparagine 921 each carry an N-linked (GlcNAc...) asparagine glycan. 2 N-linked (GlcNAc...) asparagine glycosylation sites follow: asparagine 1010 and asparagine 1015. The chain crosses the membrane as a helical span at residues 1054-1076 (FPGHTLIAVATAVVLGGLIFIAF). The Cytoplasmic portion of the chain corresponds to 1077-1116 (MFQLQGIHPWRTFQRWIRRNQEKFSSISLSELIHRSKSEE).

In terms of assembly, component of the CatSper complex or CatSpermasome composed of the core pore-forming members CATSPER1, CATSPER2, CATSPER3 and CATSPER4 as well as auxiliary members CATSPERB, CATSPERG, CATSPERD, CATSPERE, CATSPERZ, C2CD6/CATSPERT, TMEM249, TMEM262 and EFCAB9. HSPA1 may be an additional auxiliary complex member. The core complex members CATSPER1, CATSPER2, CATSPER3 and CATSPER4 form a heterotetrameric channel. The auxiliary CATSPERB, CATSPERG, CATSPERD and CATSPERE subunits form a pavilion-like structure over the pore which stabilizes the complex through interactions with CATSPER4, CATSPER3, CATSPER1 and CATSPER2 respectively. TMEM262/CATSPERH interacts with CATSPERB, further stabilizing the complex. C2CD6/CATSPERT interacts at least with CATSPERD and is required for targeting the CatSper complex in the flagellar membrane.

Its subcellular location is the cell projection. The protein resides in the cilium. It localises to the flagellum membrane. In terms of biological role, auxiliary component of the CatSper complex, a complex involved in sperm cell hyperactivation. Sperm cell hyperactivation is needed for sperm motility which is essential late in the preparation of sperm for fertilization. The sequence is that of Cation channel sperm-associated auxiliary subunit beta from Homo sapiens (Human).